We begin with the raw amino-acid sequence, 286 residues long: Ferric acinetobactin reductase (286 aa).

The FAD-binding FR-type domain occupies 25-131; that stretch reads MEQLEMTIVS…IGPRPHFIPN (107 aa). Positions 79, 80, 82, 96, 98, 100, 102, 104, 106, 250, 252, and 255 each coordinate FAD.

The protein belongs to the SIP oxidoreductase family. Monomer in solution. Requires FAD as cofactor.

It catalyses the reaction 2 a Fe(II)-siderophore + NAD(+) + H(+) = 2 a Fe(III)-siderophore + NADH. The catalysed reaction is 2 a Fe(II)-siderophore + NADP(+) + H(+) = 2 a Fe(III)-siderophore + NADPH. In terms of biological role, ferric-siderophore reductase involved in iron removal from the siderophores after their transport into the cell. Interacts with the siderophores acinetobactin (Acb) and preacinetobactin (pre-Acb) and catalyzes the reduction of the ferric iron bound to the siderophores to ferrous iron, resulting in destabilization of the siderophore chelation complex and entrance of ferrous iron into the intracellular pool of bioavailable metals. Can use NADH and NADPH as electron donors in vitro, but the reduction rate is very slow, suggesting that NADH and NADPH are not the physiological partners of BauF. This Acinetobacter baumannii protein is Ferric acinetobactin reductase.